The chain runs to 1090 residues: UPF0507 protein EC1118_1M3_1541g (1090 aa).

The VPS9 domain maps to 289–436 (FSVNQLLTDF…FEDFNKNTGN (148 aa)).

Belongs to the UPF0507 family.

This chain is UPF0507 protein EC1118_1M3_1541g, found in Saccharomyces cerevisiae (strain Lalvin EC1118 / Prise de mousse) (Baker's yeast).